The primary structure comprises 997 residues: Burkholderia TALE-like protein 2 (997 aa).

Residues 19–50 (LSPLERIKIEKHYGGGATLAFISNQHDELAQV) form a Cryptic repeat -1 repeat. A Cryptic repeat 0 repeat occupies 51 to 83 (LSRADILKIASYDCAAQALQAVLDCGPMLGKRG). Core repeat repeat units lie at residues 84-116 (FSRADIVRIAGNGGGAQALYSVLDVEPTLGKRG), 117-147 (FSQVDVVKIAGGGAQALHTVLEIGPTLGERG), 148-180 (FSRGDIVTIAGNNGGAQALQAVLELEPTLRERG), 181-213 (FNQADIVKIAGNGGGAQALQAVLDVEPALGKRG), 214-244 (FSRVDIAKIAGGGAQALQAVLGLEPTLRKRG), 245-277 (FHPTDIIKIAGNNGGAQALQAVLDLELMLRERG), 278-310 (FSQADIVKMASNIGGAQALQAVLNLEPALCERG), 311-343 (FSQPDIVKMAGNSGGAQALQAVLDLELAFRERG), 344-376 (FSQADIVKMASNIGGAQALQAVLELEPALHERG), 377-409 (FSQANIVKMAGNSGGAQALQAVLDLELVFRERG), 410-442 (FSQPEIVEMAGNIGGAQALHTVLDLELAFRERG), 443-475 (VRQADIVKIVGNNGGAQALQAVFELEPTLRERG), 476-508 (FNQATIVKIAANGGGAQALYSVLDVEPTLDKRG), 509-539 (FSRVDIVKIAGGGAQALHTAFELEPTLRKRG), 540-572 (FNPTDIVKIAGNKGGAQALQAVLELEPALRERG), 573-605 (FNQATIVKMAGNAGGAQALYSVLDVEPALRERG), 606-638 (FSQPEIVKIAGNIGGAQALHTVLELEPTLHKRG), 639-671 (FNPTDIVKIAGNSGGAQALQAVLELEPAFRERG), 672-704 (FGQPDIVKMASNIGGAQALQAVLELEPALRERG), 705-737 (FSQPDIVEMAGNIGGAQALQAVLELEPAFRERG), 738-770 (FSQSDIVKIAGNIGGAQALQAVLELEPTLRESD), 771-803 (FRQADIVNIAGNDGSTQALKAVIEHGPRLRQRG), 804-836 (FNRASIVKIAGNSGGAQALQAVLKHGPTLDERG), 837-869 (FNLTNIVKIAGNGGGAQALKAVIEHGPTLQQRG), 870-902 (FNLTDIVEMAGKGGGAQALKAVLEHGPTLRQRG), 903-935 (FNLIDIVEMASNTGGAQALKTVLEHGPTLRQRD), and 936-967 (LSLIDIVEIASNGGAQALKAVLKYGPVLMQAG). A buD domain region spans residues 84–967 (FSRADIVRIA…KYGPVLMQAG (884 aa)). 4 ANK repeats span residues 772-801 (RQADIVNIAGNDGSTQALKAVIEHGPRLRQ), 805-834 (NRASIVKIAGNSGGAQALQAVLKHGPTLDE), 838-867 (NLTNIVKIAGNGGGAQALKAVIEHGPTLQQ), and 871-900 (NLTDIVEMAGKGGGAQALKAVLEHGPTLRQ). Residues 968 to 997 (RSNEEIVHVAARRGGAGRIRKMVALLLERQ) form a Cryptic repeat +1 repeat.

It belongs to the transcription activator-like effector (TALE) family. Bat subfamily.

Functionally, binds to DNA in a sequence-specific manner. The sequence is that of Burkholderia TALE-like protein 2 from Mycetohabitans rhizoxinica (strain DSM 19002 / CIP 109453 / HKI 454) (Paraburkholderia rhizoxinica).